We begin with the raw amino-acid sequence, 280 residues long: Energy-coupling factor transporter ATP-binding protein EcfA1 (280 aa).

The ABC transporter domain maps to 6–241 (IELKNVTFRY…GDELLDLGLD (236 aa)). 41-48 (GHNGSGKS) serves as a coordination point for ATP.

Belongs to the ABC transporter superfamily. Energy-coupling factor EcfA family. As to quaternary structure, forms a stable energy-coupling factor (ECF) transporter complex composed of 2 membrane-embedded substrate-binding proteins (S component), 2 ATP-binding proteins (A component) and 2 transmembrane proteins (T component).

It localises to the cell membrane. Functionally, ATP-binding (A) component of a common energy-coupling factor (ECF) ABC-transporter complex. Unlike classic ABC transporters this ECF transporter provides the energy necessary to transport a number of different substrates. This is Energy-coupling factor transporter ATP-binding protein EcfA1 from Streptococcus mutans serotype c (strain ATCC 700610 / UA159).